A 248-amino-acid chain; its full sequence is 1-(5-phosphoribosyl)-5-[(5-phosphoribosylamino)methylideneamino] imidazole-4-carboxamide isomerase (248 aa).

Residue Asp-8 is the Proton acceptor of the active site. Asp-129 serves as the catalytic Proton donor.

It belongs to the HisA/HisF family.

It localises to the cytoplasm. The enzyme catalyses 1-(5-phospho-beta-D-ribosyl)-5-[(5-phospho-beta-D-ribosylamino)methylideneamino]imidazole-4-carboxamide = 5-[(5-phospho-1-deoxy-D-ribulos-1-ylimino)methylamino]-1-(5-phospho-beta-D-ribosyl)imidazole-4-carboxamide. It functions in the pathway amino-acid biosynthesis; L-histidine biosynthesis; L-histidine from 5-phospho-alpha-D-ribose 1-diphosphate: step 4/9. The protein is 1-(5-phosphoribosyl)-5-[(5-phosphoribosylamino)methylideneamino] imidazole-4-carboxamide isomerase of Rhizobium johnstonii (strain DSM 114642 / LMG 32736 / 3841) (Rhizobium leguminosarum bv. viciae).